We begin with the raw amino-acid sequence, 84 residues long: Small ribosomal subunit protein bS16 (84 aa).

This sequence belongs to the bacterial ribosomal protein bS16 family.

The sequence is that of Small ribosomal subunit protein bS16 from Koribacter versatilis (strain Ellin345).